The sequence spans 148 residues: UPF0178 protein Pcar_2632 (148 aa).

Belongs to the UPF0178 family.

The chain is UPF0178 protein Pcar_2632 from Syntrophotalea carbinolica (strain DSM 2380 / NBRC 103641 / GraBd1) (Pelobacter carbinolicus).